Consider the following 542-residue polypeptide: Putative beta-glucosidase 23 (542 aa).

Positions 1–29 (MAACTSSLVSLLLLLLLLLLLLVAGEATA) are cleaved as a signal peptide. Asn34 carries an N-linked (GlcNAc...) asparagine glycan. Gln88 contacts a beta-D-glucoside. Residue Asn135 is glycosylated (N-linked (GlcNAc...) asparagine). An a beta-D-glucoside-binding site is contributed by His216. The Proton donor role is filled by Glu262. Cysteines 281 and 289 form a disulfide. Tyr405 contributes to the a beta-D-glucoside binding site. Asn445 is a glycosylation site (N-linked (GlcNAc...) asparagine). A beta-D-glucoside is bound by residues Trp476 and Phe492.

The protein belongs to the glycosyl hydrolase 1 family.

The catalysed reaction is Hydrolysis of terminal, non-reducing beta-D-glucosyl residues with release of beta-D-glucose.. The polypeptide is Putative beta-glucosidase 23 (BGLU23) (Oryza sativa subsp. japonica (Rice)).